The primary structure comprises 102 residues: Small ribosomal subunit protein uS10 (102 aa).

This sequence belongs to the universal ribosomal protein uS10 family. Part of the 30S ribosomal subunit.

Involved in the binding of tRNA to the ribosomes. In Syntrophus aciditrophicus (strain SB), this protein is Small ribosomal subunit protein uS10.